The primary structure comprises 1016 residues: Protein TIC110, chloroplastic (1016 aa).

A chloroplast-targeting transit peptide spans 1 to 51; sequence MNPSLVTAINAPISPSPRSPLLSHFLPTLPHRFSKSECLSRRRYRVSFPRS. The residue at position 52 (Ser52) is an N-acetylserine. The Stromal portion of the chain corresponds to 52–95; that stretch reads SAASSDQLSVSTQAKNPGIHGNKKELTGLQPIVEKMTPPVRLAT. A helical membrane pass occupies residues 96 to 116; that stretch reads SAVVLAASLATGYGLGLRLAG. The Chloroplast intermembrane segment spans residues 117–118; sequence SR. A helical membrane pass occupies residues 119–139; it reads NIAFGGAAVAGAAGGAVVYAL. The Stromal portion of the chain corresponds to 140-259; sequence NSAVPEVAAI…EREGDAEQRR (120 aa). Residues 260-280 traverse the membrane as a helical segment; it reads AFMRLVYVSALVFGDASSFLL. The Chloroplast intermembrane segment spans residues 281–368; it reads PWKRVLKVTD…SILKSRTRAA (88 aa). The helical transmembrane segment at 369–386 threads the bilayer; it reads KSLASVVEELEKVLEFNN. Residues 387-632 lie on the Stromal side of the membrane; the sequence is LLVSLKSHSE…RAAENRTDSA (246 aa). The helical transmembrane segment at 633 to 650 threads the bilayer; that stretch reads KELKKMIAFNTLVVTEMV. Residues 651-719 lie on the Chloroplast intermembrane side of the membrane; that stretch reads ADIKGESSDK…DDLPDRDRID (69 aa). Residues 654 to 669 show a composition bias toward basic and acidic residues; sequence KGESSDKAPEEDPVQE. Residues 654–708 are disordered; sequence KGESSDKAPEEDPVQEKEEDDEDEEWGSLESLRKTRPDKELAEKMGKPGQTEITL. Over residues 670–680 the composition is skewed to acidic residues; it reads KEEDDEDEEWG. Basic and acidic residues predominate over residues 684-699; it reads SLRKTRPDKELAEKMG. Residues 720–736 traverse the membrane as a helical segment; sequence LYKTYLLYCVTGEVTRI. Residues 737 to 1016 are Stromal-facing; the sequence is PFGAQITTKR…SAAEEGNFVF (280 aa).

The protein belongs to the chloroplast envelope anion channel-forming Tic110 (TC 1.A.18) family. As to quaternary structure, part of the Tic complex. Interacts with HSP70, HSP93 and TIC40. Interacts with the Toc complex components TOC33, TOC75 and TOC159. Interacts with LTD. As to expression, expressed in seedlings, flowers, leaves, stems and roots.

Its subcellular location is the plastid. It localises to the chloroplast inner membrane. In terms of biological role, involved in protein precursor import into chloroplasts. Forms a voltage-dependent cation-selective channel at the inner envelope of chloroplasts, which specifically responds to a transit peptide. Associates with both the precursor and mature forms of the preprotein. This Arabidopsis thaliana (Mouse-ear cress) protein is Protein TIC110, chloroplastic (TIC110).